A 416-amino-acid chain; its full sequence is Serine hydroxymethyltransferase (416 aa).

(6S)-5,6,7,8-tetrahydrofolate contacts are provided by residues Leu-121 and 125–127; that span reads GHL. Position 230 is an N6-(pyridoxal phosphate)lysine (Lys-230). 355-357 contacts (6S)-5,6,7,8-tetrahydrofolate; that stretch reads SPF.

This sequence belongs to the SHMT family. In terms of assembly, homodimer. Pyridoxal 5'-phosphate serves as cofactor.

The protein localises to the cytoplasm. It catalyses the reaction (6R)-5,10-methylene-5,6,7,8-tetrahydrofolate + glycine + H2O = (6S)-5,6,7,8-tetrahydrofolate + L-serine. It participates in one-carbon metabolism; tetrahydrofolate interconversion. It functions in the pathway amino-acid biosynthesis; glycine biosynthesis; glycine from L-serine: step 1/1. In terms of biological role, catalyzes the reversible interconversion of serine and glycine with tetrahydrofolate (THF) serving as the one-carbon carrier. This reaction serves as the major source of one-carbon groups required for the biosynthesis of purines, thymidylate, methionine, and other important biomolecules. Also exhibits THF-independent aldolase activity toward beta-hydroxyamino acids, producing glycine and aldehydes, via a retro-aldol mechanism. This is Serine hydroxymethyltransferase from Streptococcus thermophilus (strain ATCC BAA-250 / LMG 18311).